The sequence spans 216 residues: Ribosomal RNA small subunit methyltransferase G (216 aa).

S-adenosyl-L-methionine contacts are provided by G75, L80, and R141.

The protein belongs to the methyltransferase superfamily. RNA methyltransferase RsmG family.

The protein resides in the cytoplasm. The catalysed reaction is guanosine(527) in 16S rRNA + S-adenosyl-L-methionine = N(7)-methylguanosine(527) in 16S rRNA + S-adenosyl-L-homocysteine. In terms of biological role, specifically methylates the N7 position of guanine in position 527 of 16S rRNA. This Nitrosospira multiformis (strain ATCC 25196 / NCIMB 11849 / C 71) protein is Ribosomal RNA small subunit methyltransferase G.